A 491-amino-acid polypeptide reads, in one-letter code: Katanin p60 ATPase-containing subunit A1 (491 aa).

Positions 1-29 are interaction with KATNB1; sequence MSLLMITENVKLAREYALLGNYDSAMVYY. The tract at residues 1–75 is interaction with dynein and NDEL1; that stretch reads MSLLMITENV…VKEIMKTLES (75 aa). Residues 1 to 185 form an interaction with microtubules region; that stretch reads MSLLMITENV…EPEANKFDST (185 aa). The residue at position 42 (Ser42) is a Phosphoserine; by DYRK2. The interval 87 to 183 is disordered; that stretch reads QHELPSSEGE…VTEPEANKFD (97 aa). Basic and acidic residues predominate over residues 145–169; it reads HSDRGKAVRSREKKEQSKGREEKNK. Position 249 to 256 (249 to 256) interacts with ATP; the sequence is GPPGTGKT.

This sequence belongs to the AAA ATPase family. Katanin p60 subunit A1 subfamily. As to quaternary structure, can homooligomerize into hexameric rings, which may be promoted by interaction with microtubules. Interacts with KATNB1, which may serve as a targeting subunit. Interacts with ASPM; the katanin complex formation KATNA1:KATNB1 is required for the association of ASPM. Interacts with dynein and NDEL1. Associates with the E3 ligase complex containing DYRK2, EDD/UBR5, DDB1 and DCAF1 proteins (EDVP complex). Interacts with KLHL42 (via the kelch domains). Interacts with CUL3; the interaction is enhanced by KLHL42. Interacts with KATNB1 and KATNBL1. Phosphorylation by DYRK2 triggers ubiquitination and subsequent degradation. In terms of processing, ubiquitinated by the BCR(KLHL42) E3 ubiquitin ligase complex, leading to its proteasomal degradation. Ubiquitinated by the EDVP E3 ligase complex and subsequently targeted for proteasomal degradation.

It localises to the cytoplasm. The protein resides in the midbody. Its subcellular location is the cytoskeleton. It is found in the microtubule organizing center. The protein localises to the centrosome. It localises to the spindle pole. The protein resides in the spindle. The enzyme catalyses n ATP + n H2O + a microtubule = n ADP + n phosphate + (n+1) alpha/beta tubulin heterodimers.. ATPase activity is stimulated by microtubules, which promote homooligomerization. ATP-dependent microtubule severing is stimulated by interaction with KATNB1. Its function is as follows. Catalytic subunit of a complex which severs microtubules in an ATP-dependent manner. Microtubule severing may promote rapid reorganization of cellular microtubule arrays and the release of microtubules from the centrosome following nucleation. Microtubule release from the mitotic spindle poles may allow depolymerization of the microtubule end proximal to the spindle pole, leading to poleward microtubule flux and poleward motion of chromosome. Microtubule release within the cell body of neurons may be required for their transport into neuronal processes by microtubule-dependent motor proteins. This transport is required for axonal growth. The chain is Katanin p60 ATPase-containing subunit A1 (Katna1) from Rattus norvegicus (Rat).